Consider the following 864-residue polypeptide: Probable M1 family aminopeptidase 1 (864 aa).

Substrate is bound by residues glutamate 149 and glycine 289–asparagine 293. A Zn(2+)-binding site is contributed by histidine 325. Glutamate 326 functions as the Proton acceptor in the catalytic mechanism. 2 residues coordinate Zn(2+): histidine 329 and glutamate 348.

The protein belongs to the peptidase M1 family. The cofactor is Zn(2+).

This Encephalitozoon cuniculi (strain GB-M1) (Microsporidian parasite) protein is Probable M1 family aminopeptidase 1.